Reading from the N-terminus, the 210-residue chain is MIRLFQLYEHQLKVRPKLTNSIMTGALFGIGDVSAQLLFPSGPDTLPPSAQTNDVKRGKYDIPRTVRAVVYGSMIFSFIGDRWYRFLTKVKFSNKPAKHWSNMVLRVCVDQLGFAPLGLPFYFGCMSLLEGHGLGAAREKIKLQWWDTLKTNWCVWPLFQMVNFSLVPLQHRLLAANVVAIFWNTFLSYTNSQIPVGGHKLTVQYPPTVQ.

Transmembrane regions (helical) follow at residues 22-39 (IMTGALFGIGDVSAQLLF), 68-84 (AVVYGSMIFSFIGDRWY), 112-129 (LGFAPLGLPFYFGCMSLL), and 173-189 (LLAANVVAIFWNTFLSY).

The protein belongs to the peroxisomal membrane protein PXMP2/4 family.

The protein localises to the mitochondrion inner membrane. Its function is as follows. May be involved in cellular response to stress. Required to maintain mitochondrial DNA (mtDNA) integrity and stability. The chain is Protein SYM1 (SYM1) from Candida glabrata (strain ATCC 2001 / BCRC 20586 / JCM 3761 / NBRC 0622 / NRRL Y-65 / CBS 138) (Yeast).